A 191-amino-acid polypeptide reads, in one-letter code: 2-amino-4-hydroxy-6-hydroxymethyldihydropteridine pyrophosphokinase (191 aa).

The protein belongs to the HPPK family.

The enzyme catalyses 6-hydroxymethyl-7,8-dihydropterin + ATP = (7,8-dihydropterin-6-yl)methyl diphosphate + AMP + H(+). The protein operates within cofactor biosynthesis; tetrahydrofolate biosynthesis; 2-amino-4-hydroxy-6-hydroxymethyl-7,8-dihydropteridine diphosphate from 7,8-dihydroneopterin triphosphate: step 4/4. Its function is as follows. Catalyzes the transfer of pyrophosphate from adenosine triphosphate (ATP) to 6-hydroxymethyl-7,8-dihydropterin, an enzymatic step in folate biosynthesis pathway. The protein is 2-amino-4-hydroxy-6-hydroxymethyldihydropteridine pyrophosphokinase (folK) of Mycobacterium leprae (strain TN).